Reading from the N-terminus, the 443-residue chain is ATP-dependent protease ATPase subunit HslU (443 aa).

ATP is bound by residues Ile18, Gly60–Glu65, Asp256, Glu321, and Arg393.

The protein belongs to the ClpX chaperone family. HslU subfamily. As to quaternary structure, a double ring-shaped homohexamer of HslV is capped on each side by a ring-shaped HslU homohexamer. The assembly of the HslU/HslV complex is dependent on binding of ATP.

The protein resides in the cytoplasm. Functionally, ATPase subunit of a proteasome-like degradation complex; this subunit has chaperone activity. The binding of ATP and its subsequent hydrolysis by HslU are essential for unfolding of protein substrates subsequently hydrolyzed by HslV. HslU recognizes the N-terminal part of its protein substrates and unfolds these before they are guided to HslV for hydrolysis. This is ATP-dependent protease ATPase subunit HslU from Wigglesworthia glossinidia brevipalpis.